We begin with the raw amino-acid sequence, 442 residues long: Probable D-serine dehydratase (442 aa).

Lys115 bears the N6-(pyridoxal phosphate)lysine mark.

The protein belongs to the serine/threonine dehydratase family. DsdA subfamily. Pyridoxal 5'-phosphate is required as a cofactor.

It catalyses the reaction D-serine = pyruvate + NH4(+). This is Probable D-serine dehydratase from Halalkalibacterium halodurans (strain ATCC BAA-125 / DSM 18197 / FERM 7344 / JCM 9153 / C-125) (Bacillus halodurans).